Here is a 495-residue protein sequence, read N- to C-terminus: D-hydantoinase/dihydropyrimidinase (495 aa).

Positions 59, 61, and 150 each coordinate Zn(2+). Residue K150 is modified to N6-carboxylysine. Y155 serves as a coordination point for substrate. Positions 183 and 239 each coordinate Zn(2+). Position 289 (S289) interacts with substrate. D316 contacts Zn(2+). N337 serves as a coordination point for substrate.

It belongs to the metallo-dependent hydrolases superfamily. Hydantoinase/dihydropyrimidinase family. Homotetramer. It depends on Zn(2+) as a cofactor. Carboxylation allows a single lysine to coordinate two zinc ions.

The enzyme catalyses 5,6-dihydrouracil + H2O = 3-(carbamoylamino)propanoate + H(+). Functionally, catalyzes the hydrolysis of dihydropyrimidines and of the structurally related DL-5-mono-substituted hydantoins, to produce N-carbamoyl-D-amino acids. The protein is D-hydantoinase/dihydropyrimidinase of Pseudomonas putida (Arthrobacter siderocapsulatus).